The chain runs to 1138 residues: BMP-2-inducible protein kinase (1138 aa).

Serine 13 is modified (phosphoserine). In terms of domain architecture, Protein kinase spans 48–313 (VTLEESLAEG…DIFQVSYFAF (266 aa)). Residues 54 to 62 (LAEGGFSTV) and lysine 76 each bind ATP. Aspartate 177 functions as the Proton acceptor in the catalytic mechanism. Disordered stretches follow at residues 355 to 435 (TDTI…RVLQ), 638 to 831 (NRLG…PADA), and 906 to 1018 (PRSV…EFLT). Polar residues predominate over residues 358–390 (IGPTETSIAPRQRPKANSTAATSSVLTIQSSAT). Low complexity predominate over residues 417-435 (VLMVQGPPQQPPQQHRVLQ). Serine 676 carries the post-translational modification Phosphoserine. Over residues 684-701 (HSPNQKSITANLTKNGGS) the composition is skewed to polar residues. Residues 706-715 (KDQRAGKKTS) show a composition bias toward basic and acidic residues. Residues serine 733, serine 806, and serine 807 each carry the phosphoserine modification. A compositionally biased stretch (basic and acidic residues) spans 787–813 (DKHSSDSECEQAKTKRGDTSSLRRDKP). Residue threonine 819 is modified to Phosphothreonine. Residue serine 908 is modified to Phosphoserine. The segment covering 915–926 (TPFQPFSVSASK) has biased composition (polar residues). Positions 951–965 (VKQRSLQKLSSRQRR) are enriched in basic residues. 7 positions are modified to phosphoserine: serine 1010, serine 1012, serine 1013, serine 1020, serine 1022, serine 1087, and serine 1091. Positions 1117–1138 (TPQQSQPVELDPFGAAPFPSKQ) are disordered.

Belongs to the protein kinase superfamily. Ser/Thr protein kinase family. Autophosphorylated. In terms of tissue distribution, expressed in osteocytes and osteoblasts.

It is found in the nucleus. The catalysed reaction is L-seryl-[protein] + ATP = O-phospho-L-seryl-[protein] + ADP + H(+). It carries out the reaction L-threonyl-[protein] + ATP = O-phospho-L-threonyl-[protein] + ADP + H(+). May be involved in osteoblast differentiation. In Mus musculus (Mouse), this protein is BMP-2-inducible protein kinase (Bmp2k).